The primary structure comprises 249 residues: tRNA pseudouridine synthase A (249 aa).

Catalysis depends on Asp53, which acts as the Nucleophile. Residue Tyr111 coordinates substrate.

It belongs to the tRNA pseudouridine synthase TruA family. Homodimer.

It catalyses the reaction uridine(38/39/40) in tRNA = pseudouridine(38/39/40) in tRNA. Functionally, formation of pseudouridine at positions 38, 39 and 40 in the anticodon stem and loop of transfer RNAs. This Streptococcus pneumoniae (strain P1031) protein is tRNA pseudouridine synthase A.